Consider the following 297-residue polypeptide: Protein COFACTOR ASSEMBLY OF COMPLEX C SUBUNIT B CCB4, chloroplastic (297 aa).

A chloroplast-targeting transit peptide spans 1 to 33 (MEARIILLRIQIPWSANRQFSHPPLDFPRFIRA). The Stromal segment spans residues 34–70 (SSSSTSQKPKTYEGPKPRKNLVADFISKNDDLVRSLP). Residues 71-91 (IYVGGASLLAVLFNRTVSGIA) form a helical membrane-spanning segment. Residues 92–103 (PVADASSSQSRA) are Lumenal-facing. The helical transmembrane segment at 104–124 (DLLALGLAVTNLLTGLVWLSI) threads the bilayer. The Stromal segment spans residues 125 to 297 (RPKSITPVNP…DSDEISRVTV (173 aa)).

It is found in the plastid. The protein localises to the chloroplast thylakoid membrane. Its function is as follows. Required for the biogenesis and accumulation of native cytochrome b6 in the thylakoid membrane. Controls the conversion of apocytochrome b6 to holocytochrome b6. Required for covalent binding of the c-type heme to cytochrome b6. The protein is Protein COFACTOR ASSEMBLY OF COMPLEX C SUBUNIT B CCB4, chloroplastic of Arabidopsis thaliana (Mouse-ear cress).